Consider the following 377-residue polypeptide: Chaperone protein DnaJ (377 aa).

In terms of domain architecture, J spans Asp4 to Gly69. The segment at Gly135–Glu213 adopts a CR-type zinc-finger fold. Zn(2+) is bound by residues Cys148, Cys151, Cys165, Cys168, Cys187, Cys190, Cys201, and Cys204. CXXCXGXG motif repeat units lie at residues Cys148–Gly155, Cys165–Gly172, Cys187–Gly194, and Cys201–Gly208.

It belongs to the DnaJ family. In terms of assembly, homodimer. Zn(2+) serves as cofactor.

It localises to the cytoplasm. Its function is as follows. Participates actively in the response to hyperosmotic and heat shock by preventing the aggregation of stress-denatured proteins and by disaggregating proteins, also in an autonomous, DnaK-independent fashion. Unfolded proteins bind initially to DnaJ; upon interaction with the DnaJ-bound protein, DnaK hydrolyzes its bound ATP, resulting in the formation of a stable complex. GrpE releases ADP from DnaK; ATP binding to DnaK triggers the release of the substrate protein, thus completing the reaction cycle. Several rounds of ATP-dependent interactions between DnaJ, DnaK and GrpE are required for fully efficient folding. Also involved, together with DnaK and GrpE, in the DNA replication of plasmids through activation of initiation proteins. This is Chaperone protein DnaJ from Brucella abortus (strain S19).